We begin with the raw amino-acid sequence, 324 residues long: Holliday junction branch migration complex subunit RuvB (324 aa).

The tract at residues M1–Y180 is large ATPase domain (RuvB-L). ATP contacts are provided by residues I19, R20, G61, K64, T65, T66, E127–F129, R170, Y180, and R217. T65 is a Mg(2+) binding site. Residues S181–G251 form a small ATPAse domain (RuvB-S) region. The head domain (RuvB-H) stretch occupies residues K254 to L324. Residues R307 and R312 each contribute to the DNA site.

The protein belongs to the RuvB family. As to quaternary structure, homohexamer. Forms an RuvA(8)-RuvB(12)-Holliday junction (HJ) complex. HJ DNA is sandwiched between 2 RuvA tetramers; dsDNA enters through RuvA and exits via RuvB. An RuvB hexamer assembles on each DNA strand where it exits the tetramer. Each RuvB hexamer is contacted by two RuvA subunits (via domain III) on 2 adjacent RuvB subunits; this complex drives branch migration. In the full resolvosome a probable DNA-RuvA(4)-RuvB(12)-RuvC(2) complex forms which resolves the HJ.

It localises to the cytoplasm. It carries out the reaction ATP + H2O = ADP + phosphate + H(+). Functionally, the RuvA-RuvB-RuvC complex processes Holliday junction (HJ) DNA during genetic recombination and DNA repair, while the RuvA-RuvB complex plays an important role in the rescue of blocked DNA replication forks via replication fork reversal (RFR). RuvA specifically binds to HJ cruciform DNA, conferring on it an open structure. The RuvB hexamer acts as an ATP-dependent pump, pulling dsDNA into and through the RuvAB complex. RuvB forms 2 homohexamers on either side of HJ DNA bound by 1 or 2 RuvA tetramers; 4 subunits per hexamer contact DNA at a time. Coordinated motions by a converter formed by DNA-disengaged RuvB subunits stimulates ATP hydrolysis and nucleotide exchange. Immobilization of the converter enables RuvB to convert the ATP-contained energy into a lever motion, pulling 2 nucleotides of DNA out of the RuvA tetramer per ATP hydrolyzed, thus driving DNA branch migration. The RuvB motors rotate together with the DNA substrate, which together with the progressing nucleotide cycle form the mechanistic basis for DNA recombination by continuous HJ branch migration. Branch migration allows RuvC to scan DNA until it finds its consensus sequence, where it cleaves and resolves cruciform DNA. In Wolbachia sp. subsp. Drosophila simulans (strain wRi), this protein is Holliday junction branch migration complex subunit RuvB.